Here is a 224-residue protein sequence, read N- to C-terminus: Lipoprotein-releasing system ATP-binding protein LolD (224 aa).

One can recognise an ABC transporter domain in the interval 5–224 (LRAENIKKVI…GKVVGEITRV (220 aa)). 37 to 44 (GASGSGKS) is a binding site for ATP.

This sequence belongs to the ABC transporter superfamily. Lipoprotein translocase (TC 3.A.1.125) family. In terms of assembly, the complex is composed of two ATP-binding proteins (LolD) and two transmembrane proteins (LolC and LolE).

The protein localises to the cell inner membrane. Functionally, part of the ABC transporter complex LolCDE involved in the translocation of mature outer membrane-directed lipoproteins, from the inner membrane to the periplasmic chaperone, LolA. Responsible for the formation of the LolA-lipoprotein complex in an ATP-dependent manner. This Aquifex aeolicus (strain VF5) protein is Lipoprotein-releasing system ATP-binding protein LolD.